The primary structure comprises 535 residues: uncharacterized protein (535 aa).

The segment at 1 to 34 is disordered; that stretch reads MKAIDNQIRNISSSHQDKHSDKVNSHQHHGKVDK. Basic and acidic residues predominate over residues 15 to 34; that stretch reads HQDKHSDKVNSHQHHGKVDK.

This is an uncharacterized protein from Escherichia coli (strain K12).